Here is a 659-residue protein sequence, read N- to C-terminus: Crossover junction endonuclease MUS81 (659 aa).

The Helix-hairpin-helix motif 1 signature appears at 59–78; the sequence is KDLSQIKGFGKWMVKLMKGY. The region spanning 404–503 is the ERCC4 domain; that stretch reads ILILDDREKF…KKLIYILEGD (100 aa). A Helix-hairpin-helix motif 2 motif is present at residues 585–622; that stretch reads TISDVFAIQLMQVPQVTEEIAIAVLDMYPTLLSLASAY.

Belongs to the XPF family. As to quaternary structure, forms a heterodimer with EME1A or EME1B. Mg(2+) serves as cofactor. It depends on Ca(2+) as a cofactor. Ubiquitous but preferentially expressed in young flowers buds, notably in anthers.

The protein resides in the nucleus. It is found in the nucleolus. Its function is as follows. Interacts with EME1 to form a DNA structure-specific endonuclease with substrate preference for branched DNA structures with a 5'-end at the branch nick. Typical substrates include 3'-flap structures, D-loops, replication forks, nicked Holliday junctions and also intact Holliday junctions with a reduced efficiency. May be required in mitosis for the processing of stalled or collapsed replication fork intermediates. Plays a role in DNA repair and in genotoxic stress-induced homologous recombination (HR) in somatic cells. Mediates a subset of meiotic recombination events that are insensitive to crossover interference. Together with SEND1, essential for the resolution of toxic replication structures to ensure genome stability, and to maintain telomere integrity and replication. The chain is Crossover junction endonuclease MUS81 from Arabidopsis thaliana (Mouse-ear cress).